A 183-amino-acid polypeptide reads, in one-letter code: Ribulose bisphosphate carboxylase small subunit, chloroplastic (183 aa).

The N-terminal 58 residues, methionine 1 to glutamine 58, are a transit peptide targeting the chloroplast.

It belongs to the RuBisCO small chain family. As to quaternary structure, heterohexadecamer of 8 large and 8 small subunits.

It is found in the plastid. Its subcellular location is the chloroplast. Its function is as follows. RuBisCO catalyzes two reactions: the carboxylation of D-ribulose 1,5-bisphosphate, the primary event in carbon dioxide fixation, as well as the oxidative fragmentation of the pentose substrate. Both reactions occur simultaneously and in competition at the same active site. Although the small subunit is not catalytic it is essential for maximal activity. In Hevea brasiliensis (Para rubber tree), this protein is Ribulose bisphosphate carboxylase small subunit, chloroplastic.